A 72-amino-acid polypeptide reads, in one-letter code: Translation initiation factor IF-1 (72 aa).

Residues 1–72 form the S1-like domain; that stretch reads MAKDDVIQMQ…SRARIVFRTK (72 aa).

It belongs to the IF-1 family. Component of the 30S ribosomal translation pre-initiation complex which assembles on the 30S ribosome in the order IF-2 and IF-3, IF-1 and N-formylmethionyl-tRNA(fMet); mRNA recruitment can occur at any time during PIC assembly.

It is found in the cytoplasm. One of the essential components for the initiation of protein synthesis. Stabilizes the binding of IF-2 and IF-3 on the 30S subunit to which N-formylmethionyl-tRNA(fMet) subsequently binds. Helps modulate mRNA selection, yielding the 30S pre-initiation complex (PIC). Upon addition of the 50S ribosomal subunit IF-1, IF-2 and IF-3 are released leaving the mature 70S translation initiation complex. The protein is Translation initiation factor IF-1 of Herminiimonas arsenicoxydans.